Reading from the N-terminus, the 425-residue chain is Adenosylhomocysteinase (425 aa).

Substrate is bound by residues T60, D132, and E157. 158 to 160 (TTT) is an NAD(+) binding site. Substrate-binding residues include K187 and D191. Residues N192, 221–226 (GYGWCG), E244, N279, 300–302 (SGH), and N347 each bind NAD(+).

Belongs to the adenosylhomocysteinase family. It depends on NAD(+) as a cofactor.

The protein resides in the cytoplasm. The catalysed reaction is S-adenosyl-L-homocysteine + H2O = L-homocysteine + adenosine. It participates in amino-acid biosynthesis; L-homocysteine biosynthesis; L-homocysteine from S-adenosyl-L-homocysteine: step 1/1. In terms of biological role, may play a key role in the regulation of the intracellular concentration of adenosylhomocysteine. This chain is Adenosylhomocysteinase, found in Synechocystis sp. (strain ATCC 27184 / PCC 6803 / Kazusa).